The primary structure comprises 328 residues: Malate dehydrogenase (328 aa).

Residue glycine 11–glycine 17 participates in NAD(+) binding. Residues arginine 92 and arginine 98 each coordinate substrate. NAD(+) contacts are provided by residues asparagine 105, glutamine 112, and threonine 129–asparagine 131. 2 residues coordinate substrate: asparagine 131 and arginine 162. Residue histidine 187 is the Proton acceptor of the active site.

Belongs to the LDH/MDH superfamily. MDH type 2 family.

It carries out the reaction (S)-malate + NAD(+) = oxaloacetate + NADH + H(+). Its function is as follows. Catalyzes the reversible oxidation of malate to oxaloacetate. In Paenarthrobacter aurescens (strain TC1), this protein is Malate dehydrogenase.